We begin with the raw amino-acid sequence, 256 residues long: POU domain class 2-associating factor 1 (256 aa).

Positions 1-23 (MLWQKPTAPEQAPAPARPYQGVR) are disordered. One can recognise an OCA domain in the interval 16-38 (ARPYQGVRVKEPVKELLRRKRGH).

Belongs to the POU2AF family. Interacts with POU2F1/OCT1 and POU2F2/OCT2; the interaction increases POU2F1 and POU2F2 transactivation activity. Post-translationally, ubiquitinated; mediated by SIAH1 or SIAH2 and leading to its subsequent proteasomal degradation. B-cell specific. Detected in mainly in spleen, but also in thymus, periphral blood leukocyte and small intestine.

Its subcellular location is the nucleus. Transcriptional coactivator that specifically associates with either POU2F1/OCT1 or POU2F2/OCT2. It boosts the POU2F1/OCT1 mediated promoter activity and to a lesser extent, that of POU2F2/OCT2. It recognizes the POU domains of POU2F1/OCT1 and POU2F2/OCT2. It is essential for the response of B-cells to antigens and required for the formation of germinal centers. Regulates IL6 expression in B cells as POU2F2/OCT2 coactivator. The chain is POU domain class 2-associating factor 1 from Homo sapiens (Human).